The primary structure comprises 410 residues: Putative nickel insertion protein (410 aa).

This sequence belongs to the LarC family.

In Cyanothece sp. (strain PCC 7425 / ATCC 29141), this protein is Putative nickel insertion protein.